We begin with the raw amino-acid sequence, 1044 residues long: Elongation factor 3A (1044 aa).

S2 is modified (N-acetylserine). The stretch at 5–42 (QQSIKVLEELFQKLSVATADNRHEIASEVASFLNGNII) is one HEAT 1 repeat. Residues I42, H44, and S83 each contribute to the ADP site. HEAT repeat units follow at residues 86–123 (PYIV…AVNP), 125–162 (AIKA…AAKD), 166–203 (LRMP…TVDN), 205–241 (DIER…EVTP), 242–279 (ATLS…LVED), and 285–323 (PFLG…VGNV). Residues K187 and K196 each carry the N6,N6,N6-trimethyllysine modification. K350 participates in a covalent cross-link: Glycyl lysine isopeptide (Lys-Gly) (interchain with G-Cter in ubiquitin). The ADP site is built by T392, H396, and E397. Residues 426–641 (DEGEDLCNCE…CPAAKAYEEL (216 aa)) enclose the ABC transporter 1 domain. K636 is covalently cross-linked (Glycyl lysine isopeptide (Lys-Gly) (interchain with G-Cter in ubiquitin)). The residue at position 642 (S642) is a Phosphoserine. The region spanning 667 to 993 (VKVTNMEFQY…AGPRIEKKED (327 aa)) is the ABC transporter 2 domain. Residue N703 coordinates ADP. K789 carries the post-translational modification N6,N6,N6-trimethyllysine. E922, N925, and H951 together coordinate ADP. T972 carries the phosphothreonine modification. Position 974 is a phosphoserine (S974). The segment at 974–1044 (SGHNWVSGQG…DAYVSSDEEF (71 aa)) is disordered. Basic residues predominate over residues 1007–1031 (GGKKKKKLSSAELRKKKKERMKKKK). Phosphoserine is present on residues S1039 and S1040.

Belongs to the ABC transporter superfamily. ABCF family. EF3 subfamily. Monomer. Interacts with elongation factor 1A (eEF1A). Interacts through its N-terminus with 18S rRNA. Associates with ribosomes; preferentially binds ribosomes in the post-translocational state (bearing a peptidyl-tRNA in the P-site) in the presence of ATP, suggesting that ATP hydrolysis is required for ribosome dissociation.

The protein resides in the cytoplasm. The protein localises to the cytosol. It catalyses the reaction ATP + H2O = ADP + phosphate + H(+). Its pathway is protein biosynthesis; polypeptide chain elongation. Its activity is regulated as follows. Inhibited by the translational inhibitors neomycin and alpha-sarcin, which suppress the ATPase activity. Functionally, ribosome-dependent ATPase that functions in cytoplasmic translation elongation. Required for the ATP-dependent release of deacylated tRNA from the ribosomal E-site during protein biosynthesis. Stimulates the eEF1A-dependent binding of aminoacyl-tRNA to the ribosomal A-site, which has reduced affinity for tRNA as long as the E-site is occupied. Assists translation termination by stimulating the release of nascent protein from the ribosome by release factors. In nutrient-replete conditions, occupies the space on the ribosome bound by GCN1 during amino acid starvation conditions, and therefore indirectly negatively regulates GCN2 kinase activity in replete conditions. The chain is Elongation factor 3A (YEF3) from Saccharomyces cerevisiae (strain ATCC 204508 / S288c) (Baker's yeast).